Reading from the N-terminus, the 274-residue chain is NAD kinase (274 aa).

The active-site Proton acceptor is Asp-50. Residues 50–51 (DG), 126–127 (NE), Arg-152, Asp-154, 165–170 (TAYNKS), and Ala-189 each bind NAD(+).

Belongs to the NAD kinase family. A divalent metal cation serves as cofactor.

The protein localises to the cytoplasm. It carries out the reaction NAD(+) + ATP = ADP + NADP(+) + H(+). In terms of biological role, involved in the regulation of the intracellular balance of NAD and NADP, and is a key enzyme in the biosynthesis of NADP. Catalyzes specifically the phosphorylation on 2'-hydroxyl of the adenosine moiety of NAD to yield NADP. This chain is NAD kinase, found in Streptococcus gordonii (strain Challis / ATCC 35105 / BCRC 15272 / CH1 / DL1 / V288).